We begin with the raw amino-acid sequence, 407 residues long: Na(+)-translocating NADH-quinone reductase subunit F (407 aa).

The helical transmembrane segment at 3–23 (IILGVVMFTLIVLALTVMILF) threads the bilayer. The 2Fe-2S ferredoxin-type domain occupies 32-126 (GDITVEINED…NLKIELPEEI (95 aa)). [2Fe-2S] cluster-binding residues include C69, C75, C78, and C110. The FAD-binding FR-type domain occupies 129–269 (VKKWTCEVIS…SGPFGEFFAK (141 aa)).

It belongs to the NqrF family. As to quaternary structure, composed of six subunits; NqrA, NqrB, NqrC, NqrD, NqrE and NqrF. It depends on [2Fe-2S] cluster as a cofactor. FAD serves as cofactor.

Its subcellular location is the cell inner membrane. It catalyses the reaction a ubiquinone + n Na(+)(in) + NADH + H(+) = a ubiquinol + n Na(+)(out) + NAD(+). NQR complex catalyzes the reduction of ubiquinone-1 to ubiquinol by two successive reactions, coupled with the transport of Na(+) ions from the cytoplasm to the periplasm. The first step is catalyzed by NqrF, which accepts electrons from NADH and reduces ubiquinone-1 to ubisemiquinone by a one-electron transfer pathway. The protein is Na(+)-translocating NADH-quinone reductase subunit F of Yersinia pseudotuberculosis serotype I (strain IP32953).